A 416-amino-acid polypeptide reads, in one-letter code: Serine protease inhibitor A3K (416 aa).

Residues 1 to 20 (MAFIAALGLLMAGICPAVLC) form the signal peptide. Residues N102, N182, N220, and N267 are each glycosylated (N-linked (GlcNAc...) asparagine). The segment at 365-392 (GTEGAAATAVTAALKSLPQTIPLLNFNR) is RCL.

The protein belongs to the serpin family. In terms of processing, N-glycosylated. In terms of tissue distribution, liver and plasma.

The protein resides in the secreted. In terms of biological role, binds to and inhibits kallikreins. Inhibits trypsin but not chymotrypsin or elastase. This Rattus norvegicus (Rat) protein is Serine protease inhibitor A3K (Serpina3k).